We begin with the raw amino-acid sequence, 194 residues long: Pyridoxal 5'-phosphate synthase subunit PdxT (194 aa).

Position 50 to 52 (50 to 52 (GES)) interacts with L-glutamine. Cysteine 82 functions as the Nucleophile in the catalytic mechanism. L-glutamine contacts are provided by residues arginine 109 and 136–137 (IR). Active-site charge relay system residues include histidine 172 and glutamate 174.

Belongs to the glutaminase PdxT/SNO family. As to quaternary structure, in the presence of PdxS, forms a dodecamer of heterodimers. Only shows activity in the heterodimer.

It carries out the reaction aldehydo-D-ribose 5-phosphate + D-glyceraldehyde 3-phosphate + L-glutamine = pyridoxal 5'-phosphate + L-glutamate + phosphate + 3 H2O + H(+). It catalyses the reaction L-glutamine + H2O = L-glutamate + NH4(+). The protein operates within cofactor biosynthesis; pyridoxal 5'-phosphate biosynthesis. Its function is as follows. Catalyzes the hydrolysis of glutamine to glutamate and ammonia as part of the biosynthesis of pyridoxal 5'-phosphate. The resulting ammonia molecule is channeled to the active site of PdxS. This Streptococcus pneumoniae (strain CGSP14) protein is Pyridoxal 5'-phosphate synthase subunit PdxT.